Consider the following 303-residue polypeptide: Probable 5-dehydro-4-deoxyglucarate dehydratase (303 aa).

This sequence belongs to the DapA family.

The catalysed reaction is 5-dehydro-4-deoxy-D-glucarate + H(+) = 2,5-dioxopentanoate + CO2 + H2O. Its pathway is carbohydrate acid metabolism; D-glucarate degradation; 2,5-dioxopentanoate from D-glucarate: step 2/2. This Ectopseudomonas mendocina (strain ymp) (Pseudomonas mendocina) protein is Probable 5-dehydro-4-deoxyglucarate dehydratase.